A 155-amino-acid polypeptide reads, in one-letter code: Transcriptional repressor NrdR (155 aa).

Polar residues predominate over residues 1-11 (MECPNCHQNAS). Positions 1–22 (MECPNCHQNASRVIDSRPSDEN) are disordered. The segment at 3 to 34 (CPNCHQNASRVIDSRPSDENRAIRRRRECENC) is a zinc-finger region. The 91-residue stretch at 49-139 (LLVVKNDGTR…IYREFKDMSS (91 aa)) folds into the ATP-cone domain.

This sequence belongs to the NrdR family. Zn(2+) is required as a cofactor.

Negatively regulates transcription of bacterial ribonucleotide reductase nrd genes and operons by binding to NrdR-boxes. This is Transcriptional repressor NrdR from Lactobacillus acidophilus (strain ATCC 700396 / NCK56 / N2 / NCFM).